Reading from the N-terminus, the 468-residue chain is Lysosomal dipeptide transporter MFSD1 (468 aa).

Residues 1 to 25 (MEDEEEEARALLPGGSDEAGRETRA) form a disordered region. A Dileucine internalization motif motif is present at residues 11–12 (LL). The next 12 membrane-spanning stretches (helical) occupy residues 42–62 (LAHRLVVLLLMCFLGFGSYFC), 86–106 (LLYAWYSWPNVVLCFFGGFLI), 116–136 (TIIFSCFVCIGQVVFALGGIF), 138–158 (AFWLMELGRFVFGIGGESLAV), 173–194 (LNLVFGLQLSMARIGSTVNMNL), 218–238 (LMIGGITCILSLVCALALAYL), 270–290 (WLIFIICVCYYVAIFPFIGLV), 307–327 (AINSVVYVISAPMSPIFGLLV), 334–354 (IIWVLCAVVTTLASHIMLAFT), 364–384 (LLGLSYSLLACALWPMVAFVV), 395–415 (FMQSIQNLGLAVISIIAGMIL), and 421–441 (LFLEVFFIACVSLSLLSVVLL).

The protein belongs to the major facilitator superfamily. As to quaternary structure, homodimer. Interacts with lysosomal protein GLMP (via lumenal domain); the interaction starts while both proteins are still in the endoplasmic reticulum and is required for stabilization of MFSD1 in lysosomes but has no direct effect on its targeting to lysosomes or transporter activity.

Its subcellular location is the lysosome membrane. The catalysed reaction is L-alpha-aminoacyl-L-arginine(out) = L-alpha-aminoacyl-L-arginine(in). It carries out the reaction L-arginyl-L-alpha-amino acid(out) = L-arginyl-L-alpha-amino acid(in). The enzyme catalyses L-arginyl-glycine(out) = L-arginyl-glycine(in). It catalyses the reaction L-alpha-aminoacyl-L-lysine(out) = L-alpha-aminoacyl-L-lysine(in). The catalysed reaction is L-aspartyl-L-lysine(out) = L-aspartyl-L-lysine(in). It carries out the reaction L-alanyl-L-lysine(out) = L-alanyl-L-lysine(in). The enzyme catalyses L-lysyl-L-alpha-amino acid(out) = L-lysyl-L-alpha-amino acid(in). It catalyses the reaction L-lysyl-L-alanine(out) = L-lysyl-L-alanine(in). The catalysed reaction is L-lysyl-L-lysine(out) = L-lysyl-L-lysine(in). It carries out the reaction L-lysyl-glycine(out) = L-lysyl-glycine(in). The enzyme catalyses L-alpha-aminoacyl-L-histidine(out) = L-alpha-aminoacyl-L-histidine(in). It catalyses the reaction L-histidyl-L-alpha-amino acid(out) = L-histidyl-L-alpha-amino acid(in). The catalysed reaction is L-histidyl-glycine(out) = L-histidyl-glycine(in). In terms of biological role, lysosomal dipeptide uniporter that selectively exports lysine, arginine or histidine-containing dipeptides with a net positive charge from the lysosome lumen into the cytosol. Could play a role in a specific type of protein O-glycosylation indirectly regulating macrophages migration and tissue invasion. Also essential for liver homeostasis. This is Lysosomal dipeptide transporter MFSD1 from Bos taurus (Bovine).